The sequence spans 103 residues: Alkanal monooxygenase alpha chain (103 aa).

Heterodimer of an alpha and a beta chain.

It catalyses the reaction a long-chain fatty aldehyde + FMNH2 + O2 = a long-chain fatty acid + hnu + FMN + H2O + 2 H(+). Its function is as follows. Light-emitting reaction in luminous bacteria. The sequence is that of Alkanal monooxygenase alpha chain (luxA) from Vibrio cholerae.